The sequence spans 948 residues: Alanine--tRNA ligase (948 aa).

4 residues coordinate Zn(2+): histidine 638, histidine 642, cysteine 739, and histidine 743.

The protein belongs to the class-II aminoacyl-tRNA synthetase family. Requires Zn(2+) as cofactor.

The protein localises to the cytoplasm. It carries out the reaction tRNA(Ala) + L-alanine + ATP = L-alanyl-tRNA(Ala) + AMP + diphosphate. Catalyzes the attachment of alanine to tRNA(Ala) in a two-step reaction: alanine is first activated by ATP to form Ala-AMP and then transferred to the acceptor end of tRNA(Ala). Also edits incorrectly charged Ser-tRNA(Ala) and Gly-tRNA(Ala) via its editing domain. The sequence is that of Alanine--tRNA ligase from Paracidovorax citrulli (strain AAC00-1) (Acidovorax citrulli).